Reading from the N-terminus, the 326-residue chain is Vitamin B12 import system permease protein BtuC (326 aa).

Helical transmembrane passes span 13-35 (IRWLLCLSVLMLLALLLSLCAGE), 55-77 (IRLPRTLAVLLVGAALAISGAVM), 90-107 (LLGVSNGAGVGLIAAVLL), 111-133 (QLPNWALGLCAIAGALIITLILL), 146-168 (LLAGVALGIICSALMTWAIYFST), 188-205 (WRQSWLMLALIPVLLWIC), 242-264 (MVGVSVALAGAIGFIGLVIPHIL), 274-296 (VLLPGCALAGASALLLADIVARL), and 303-322 (LPIGVVTATLGAPVFIWLLL).

The protein belongs to the binding-protein-dependent transport system permease family. FecCD subfamily. As to quaternary structure, the complex is composed of two ATP-binding proteins (BtuD), two transmembrane proteins (BtuC) and a solute-binding protein (BtuF).

The protein resides in the cell inner membrane. Its function is as follows. Part of the ABC transporter complex BtuCDF involved in vitamin B12 import. Involved in the translocation of the substrate across the membrane. The sequence is that of Vitamin B12 import system permease protein BtuC from Shigella flexneri.